We begin with the raw amino-acid sequence, 191 residues long: Vascular endothelial growth factor A (191 aa).

An N-terminal signal peptide occupies residues 1-26; the sequence is MNFLLTWIHWGLAALLYFHNAKVLQA. 3 cysteine pairs are disulfide-bonded: C52-C94, C83-C128, and C87-C130. N-linked (GlcNAc...) asparagine glycosylation occurs at N101.

Belongs to the PDGF/VEGF growth factor family. In terms of assembly, homodimer; disulfide-linked. Also found as heterodimer with PGF. As to expression, expressed by the venom gland, and probably other tissues.

The protein localises to the secreted. Functionally, growth factor active in angiogenesis, vasculogenesis and endothelial cell growth. Induces endothelial cell proliferation, promotes cell migration, inhibits apoptosis and induces permeabilization of blood vessels. Binds to heparan sulfate and heparin. In Bitis gabonica (Gaboon adder), this protein is Vascular endothelial growth factor A.